Reading from the N-terminus, the 251-residue chain is Protein CMS1 (251 aa).

Residues M1–L37 form a disordered region.

This sequence belongs to the CMS1 family.

Its subcellular location is the nucleus. Its function is as follows. May play a role in the regulation of DNA replication and cell cycle control. In Chaetomium thermophilum (strain DSM 1495 / CBS 144.50 / IMI 039719) (Thermochaetoides thermophila), this protein is Protein CMS1 (CSM1).